The sequence spans 474 residues: ABHD16B (474 aa).

The region spanning 175 to 293 (VICCEGNAGF…MPQSWKGLVV (119 aa)) is the AB hydrolase-1 domain. Residues serine 248, aspartate 323, and histidine 423 each act as charge relay system in the active site.

It belongs to the AB hydrolase superfamily. ABHD16 family.

The enzyme catalyses a 1,2-diacyl-sn-glycero-3-phospho-L-serine + H2O = a 2-acyl-sn-glycero-3-phospho-L-serine + a fatty acid + H(+). The catalysed reaction is a 1-acylglycerol + H2O = glycerol + a fatty acid + H(+). It catalyses the reaction 1-(9Z-octadecenoyl)-glycerol + H2O = glycerol + (9Z)-octadecenoate + H(+). In terms of biological role, hydrolyzes the sn-1 position of glycerophospholipids with high specificity towards phosphatidylserine (PS), PS-PLA1 enzyme. Also hydrolyzes the acyl chain of glycerolipids with a preference for the monoacylglycerol (MAG) 1-acylglycerol, MAG lipase. Plays a regulatory role in cellular lipid homeostasis by modulating genes involved in neutral lipid degradation and in phospholipid synthesis and composition. This chain is ABHD16B, found in Rattus norvegicus (Rat).